The following is a 441-amino-acid chain: Histidinol dehydrogenase (441 aa).

Residues Y136, Q197, and N220 each coordinate NAD(+). Positions 243, 265, and 268 each coordinate substrate. 2 residues coordinate Zn(2+): Q265 and H268. Residues E333 and H334 each act as proton acceptor in the active site. The substrate site is built by H334, D367, E421, and H426. Position 367 (D367) interacts with Zn(2+). A Zn(2+)-binding site is contributed by H426.

Belongs to the histidinol dehydrogenase family. Zn(2+) serves as cofactor.

The enzyme catalyses L-histidinol + 2 NAD(+) + H2O = L-histidine + 2 NADH + 3 H(+). The protein operates within amino-acid biosynthesis; L-histidine biosynthesis; L-histidine from 5-phospho-alpha-D-ribose 1-diphosphate: step 9/9. Catalyzes the sequential NAD-dependent oxidations of L-histidinol to L-histidinaldehyde and then to L-histidine. This chain is Histidinol dehydrogenase, found in Pseudomonas fluorescens (strain Pf0-1).